We begin with the raw amino-acid sequence, 396 residues long: Ornithine aminotransferase (396 aa).

K255 is subject to N6-(pyridoxal phosphate)lysine.

It belongs to the class-III pyridoxal-phosphate-dependent aminotransferase family. OAT subfamily. Pyridoxal 5'-phosphate is required as a cofactor.

Its subcellular location is the cytoplasm. The enzyme catalyses a 2-oxocarboxylate + L-ornithine = L-glutamate 5-semialdehyde + an L-alpha-amino acid. Its pathway is amino-acid biosynthesis; L-proline biosynthesis; L-glutamate 5-semialdehyde from L-ornithine: step 1/1. Functionally, catalyzes the interconversion of ornithine to glutamate semialdehyde. In Bacillus cereus (strain Q1), this protein is Ornithine aminotransferase.